The sequence spans 180 residues: CD-NTase/cGAS isopeptidase (180 aa).

In terms of domain architecture, MPN spans 33–165 (IVISSSTIEQ…AGSYSLSASV (133 aa)). The Proton donor/acceptor role is filled by Glu-54. Residues His-115, His-117, and Asp-128 each contribute to the Zn(2+) site.

The protein belongs to the peptidase M67B family. Cap3 isopeptidase subfamily.

Its function is as follows. Metalloprotease priming reversal component of a CBASS antivirus system. CBASS (cyclic oligonucleotide-based antiphage signaling system) provides immunity against bacteriophages. The CD-NTase protein (CdnD) synthesizes cyclic nucleotides in response to infection; these serve as specific second messenger signals. The signals activate a diverse range of effectors, leading to bacterial cell death and thus abortive phage infection. A type II-C(AAG) CBASS system. Functionally, reverses the primed state of DncV, the CD-NTase. Cleaves a CdnD-GFP (green fluorescent protein) fusion protein precisely at the C-terminus of CdnD. Overexpression decreases the efficacy of CBASS protection against phage T2. Antagonism of phage defense upon overexpression is CBASS-system specific, Cap3 from this bacteria only antagonizes its cognate CBASS system and not that of C.freundii, E.coli or V.cholerae. In terms of biological role, protects E.coli against phage T2 infection. When the cdnD-cap2-cap3-cap4 operon is introduced in E.coli there is a more than 10(3) decrease in the efficiency of T2 plaque formation. The operon does not protect against phage T5 and only about 10-fold against T7. The polypeptide is CD-NTase/cGAS isopeptidase (Enterobacter hormaechei subsp. hoffmannii (strain UCI 50)).